A 51-amino-acid polypeptide reads, in one-letter code: Large ribosomal subunit protein eL39 (51 aa).

The protein belongs to the eukaryotic ribosomal protein eL39 family.

This is Large ribosomal subunit protein eL39 (rpl39e) from Methanothermobacter thermautotrophicus (strain ATCC 29096 / DSM 1053 / JCM 10044 / NBRC 100330 / Delta H) (Methanobacterium thermoautotrophicum).